A 283-amino-acid polypeptide reads, in one-letter code: Phosphatidylglycerol--prolipoprotein diacylglyceryl transferase (283 aa).

Transmembrane regions (helical) follow at residues 17-37 (LAVR…TFLG), 56-76 (FLTW…VLFY), and 92-112 (WEGG…IWLF). Arg139 is a binding site for a 1,2-diacyl-sn-glycero-3-phospho-(1'-sn-glycerol). 2 helical membrane passes run 222-242 (GQTA…AEFA) and 255-275 (GLSM…VGFV).

It belongs to the Lgt family.

The protein localises to the cell inner membrane. The enzyme catalyses L-cysteinyl-[prolipoprotein] + a 1,2-diacyl-sn-glycero-3-phospho-(1'-sn-glycerol) = an S-1,2-diacyl-sn-glyceryl-L-cysteinyl-[prolipoprotein] + sn-glycerol 1-phosphate + H(+). It functions in the pathway protein modification; lipoprotein biosynthesis (diacylglyceryl transfer). Catalyzes the transfer of the diacylglyceryl group from phosphatidylglycerol to the sulfhydryl group of the N-terminal cysteine of a prolipoprotein, the first step in the formation of mature lipoproteins. The protein is Phosphatidylglycerol--prolipoprotein diacylglyceryl transferase of Neisseria gonorrhoeae (strain ATCC 700825 / FA 1090).